A 117-amino-acid polypeptide reads, in one-letter code: Large ribosomal subunit protein bL20c (117 aa).

It belongs to the bacterial ribosomal protein bL20 family.

It is found in the plastid. Its subcellular location is the chloroplast. Its function is as follows. Binds directly to 23S ribosomal RNA and is necessary for the in vitro assembly process of the 50S ribosomal subunit. It is not involved in the protein synthesizing functions of that subunit. This is Large ribosomal subunit protein bL20c from Nasturtium officinale (Watercress).